We begin with the raw amino-acid sequence, 84 residues long: uncharacterized protein (84 aa).

It to M.jannaschii MJ1121.

This is an uncharacterized protein from Archaeoglobus fulgidus (strain ATCC 49558 / DSM 4304 / JCM 9628 / NBRC 100126 / VC-16).